Reading from the N-terminus, the 300-residue chain is uncharacterized protein (300 aa).

The span at Met1 to Gln11 shows a compositional bias: polar residues. The disordered stretch occupies residues Met1–Asp20. Residues Met1–Arg92 constitute a DNA-binding region (recombinase). A coiled-coil region spans residues Ser162 to Glu249.

This is an uncharacterized protein from Bacillus subtilis (strain 168).